The sequence spans 224 residues: UPF0758 protein AHA_0160 (224 aa).

The 123-residue stretch at 102 to 224 (PLTSPQLTRD…TVSFAERGWL (123 aa)) folds into the MPN domain. Zn(2+) is bound by residues histidine 173, histidine 175, and aspartate 186. The JAMM motif motif lies at 173–186 (HNHPSGVAEPSRAD).

The protein belongs to the UPF0758 family.

In Aeromonas hydrophila subsp. hydrophila (strain ATCC 7966 / DSM 30187 / BCRC 13018 / CCUG 14551 / JCM 1027 / KCTC 2358 / NCIMB 9240 / NCTC 8049), this protein is UPF0758 protein AHA_0160.